The primary structure comprises 2037 residues: Fatty acid synthase subunit beta (2037 aa).

The interval Met-1–Phe-453 is acetyltransferase. Catalysis depends on Ser-261, which acts as the For acetyltransferase activity. Residues Val-465 to Ser-798 form an enoyl reductase region. A dehydratase region spans residues Gly-1132–Met-1612. In terms of domain architecture, MaoC-like spans Asn-1506–Glu-1634. Positions Glu-1613 to Asp-1833 are malonyl/palmitoyl transferase. The active-site For malonyltransferase activity is the Ser-1796.

This sequence belongs to the fungal fatty acid synthetase subunit beta family. [Alpha(6)beta(6)] hexamers of two multifunctional subunits (alpha and beta).

It carries out the reaction acetyl-CoA + n malonyl-CoA + 2n NADPH + 4n H(+) = a long-chain-acyl-CoA + n CoA + n CO2 + 2n NADP(+).. It catalyses the reaction holo-[ACP] + acetyl-CoA = acetyl-[ACP] + CoA. The enzyme catalyses holo-[ACP] + malonyl-CoA = malonyl-[ACP] + CoA. The catalysed reaction is a (3R)-hydroxyacyl-[ACP] = a (2E)-enoyl-[ACP] + H2O. It carries out the reaction a 2,3-saturated acyl-[ACP] + NAD(+) = a (2E)-enoyl-[ACP] + NADH + H(+). It catalyses the reaction (9Z)-octadecenoyl-[ACP] + H2O = (9Z)-octadecenoate + holo-[ACP] + H(+). Functionally, fatty acid synthetase catalyzes the formation of long-chain fatty acids from acetyl-CoA, malonyl-CoA and NADPH. The beta subunit contains domains for: [acyl-carrier-protein] acetyltransferase and malonyltransferase, S-acyl fatty acid synthase thioesterase, enoyl-[acyl-carrier-protein] reductase, and 3-hydroxypalmitoyl-[acyl-carrier-protein] dehydratase. This is Fatty acid synthase subunit beta (FAS1) from Candida albicans (Yeast).